The primary structure comprises 113 residues: Large ribosomal subunit protein uL22 (113 aa).

This sequence belongs to the universal ribosomal protein uL22 family. As to quaternary structure, part of the 50S ribosomal subunit.

This protein binds specifically to 23S rRNA; its binding is stimulated by other ribosomal proteins, e.g. L4, L17, and L20. It is important during the early stages of 50S assembly. It makes multiple contacts with different domains of the 23S rRNA in the assembled 50S subunit and ribosome. Its function is as follows. The globular domain of the protein is located near the polypeptide exit tunnel on the outside of the subunit, while an extended beta-hairpin is found that lines the wall of the exit tunnel in the center of the 70S ribosome. The chain is Large ribosomal subunit protein uL22 from Xanthomonas oryzae pv. oryzae (strain MAFF 311018).